A 198-amino-acid chain; its full sequence is Ribonuclease HII (198 aa).

The RNase H type-2 domain maps to 6-198 (EQIAGVDEVG…APCQASLLPD (193 aa)). A divalent metal cation-binding residues include D12, E13, and D108.

It belongs to the RNase HII family. Mn(2+) is required as a cofactor. It depends on Mg(2+) as a cofactor.

It localises to the cytoplasm. It carries out the reaction Endonucleolytic cleavage to 5'-phosphomonoester.. Endonuclease that specifically degrades the RNA of RNA-DNA hybrids. The chain is Ribonuclease HII from Acaryochloris marina (strain MBIC 11017).